Reading from the N-terminus, the 403-residue chain is Dynactin subunit 2 (403 aa).

The tract at residues 1–26 (MADPKYADLPGIARNEPDVYETSDLP) is disordered. The residue at position 2 (Ala2) is an N-acetylalanine. The residue at position 6 (Tyr6) is a Phosphotyrosine. At Ser83 the chain carries Phosphoserine. Tyr86 carries the phosphotyrosine modification. Residues 100–130 (QQKYQRLLHEVQELTTEVEKIKTTVKESATE) are a coiled coil. Phosphothreonine is present on residues Thr134 and Thr200. A disordered region spans residues 184–204 (TKNSKGTGSGGKTTSGTPPDS). A coiled-coil region spans residues 216 to 248 (EQDKFSQAAKVAELEKRLTELEATVRCDQDAQN). Ser322 carries the post-translational modification Phosphoserine.

This sequence belongs to the dynactin subunit 2 family. In terms of assembly, subunit of dynactin, a multiprotein complex part of a tripartite complex with dynein and a adapter, such as BICDL1, BICD2 or HOOK3. The dynactin complex is built around ACTR1A/ACTB filament and consists of an actin-related filament composed of a shoulder domain, a pointed end and a barbed end. Its length is defined by its flexible shoulder domain. The soulder is composed of 2 DCTN1 subunits, 4 DCTN2 and 2 DCTN3. The 4 DCNT2 (via N-terminus) bind the ACTR1A filament and act as molecular rulers to determine the length. The pointed end is important for binding dynein-dynactin cargo adapters and consists of 4 subunits: ACTR10, DCNT4, DCTN5 and DCTN6. The barbed end is composed of a CAPZA1:CAPZB heterodimers, which binds ACTR1A/ACTB filament and dynactin and stabilizes dynactin. Interacts with BICD2 and CEP135. Interacts with DYNAP. Interacts with ECPAS. Interacts with MAPRE1.

Its subcellular location is the cytoplasm. It is found in the cytoskeleton. The protein localises to the microtubule organizing center. It localises to the centrosome. The protein resides in the membrane. Part of the dynactin complex that activates the molecular motor dynein for ultra-processive transport along microtubules. In the dynactin soulder domain, binds the ACTR1A filament and acts as a molecular ruler to determine the length. Modulates cytoplasmic dynein binding to an organelle, and plays a role in prometaphase chromosome alignment and spindle organization during mitosis. Involved in anchoring microtubules to centrosomes. May play a role in synapse formation during brain development. In Bos taurus (Bovine), this protein is Dynactin subunit 2 (DCTN2).